A 511-amino-acid polypeptide reads, in one-letter code: 2,3-bisphosphoglycerate-independent phosphoglycerate mutase (511 aa).

Aspartate 14 and serine 64 together coordinate Mn(2+). Serine 64 (phosphoserine intermediate) is an active-site residue. Substrate is bound by residues histidine 125, 155-156, arginine 187, arginine 193, 259-262, and lysine 333; these read RD and RADR. Mn(2+) contacts are provided by aspartate 400, histidine 404, aspartate 441, histidine 442, and histidine 460.

It belongs to the BPG-independent phosphoglycerate mutase family. In terms of assembly, monomer. Mn(2+) is required as a cofactor.

It catalyses the reaction (2R)-2-phosphoglycerate = (2R)-3-phosphoglycerate. It participates in carbohydrate degradation; glycolysis; pyruvate from D-glyceraldehyde 3-phosphate: step 3/5. Functionally, catalyzes the interconversion of 2-phosphoglycerate and 3-phosphoglycerate. This is 2,3-bisphosphoglycerate-independent phosphoglycerate mutase from Idiomarina loihiensis (strain ATCC BAA-735 / DSM 15497 / L2-TR).